A 425-amino-acid polypeptide reads, in one-letter code: Putative type I restriction enzyme MjaX specificity subunit (425 aa).

Belongs to the type-I restriction system S methylase family.

In terms of biological role, a putative specificity (S) subunit of a type I restriction enzyme thought to recognize 5'-TAGN(6)TGC-3'; the other subunits are unknown. This is Putative type I restriction enzyme MjaX specificity subunit from Methanocaldococcus jannaschii (strain ATCC 43067 / DSM 2661 / JAL-1 / JCM 10045 / NBRC 100440) (Methanococcus jannaschii).